The primary structure comprises 118 residues: Large ribosomal subunit protein bL19 (118 aa).

This sequence belongs to the bacterial ribosomal protein bL19 family.

In terms of biological role, this protein is located at the 30S-50S ribosomal subunit interface and may play a role in the structure and function of the aminoacyl-tRNA binding site. The protein is Large ribosomal subunit protein bL19 of Metamycoplasma arthritidis (strain 158L3-1) (Mycoplasma arthritidis).